Consider the following 203-residue polypeptide: Large ribosomal subunit protein bL25 (203 aa).

The protein belongs to the bacterial ribosomal protein bL25 family. CTC subfamily. As to quaternary structure, part of the 50S ribosomal subunit; part of the 5S rRNA/L5/L18/L25 subcomplex. Contacts the 5S rRNA. Binds to the 5S rRNA independently of L5 and L18.

Functionally, this is one of the proteins that binds to the 5S RNA in the ribosome where it forms part of the central protuberance. This Rickettsia conorii (strain ATCC VR-613 / Malish 7) protein is Large ribosomal subunit protein bL25.